Consider the following 182-residue polypeptide: ATP-dependent protease subunit HslV (182 aa).

Residue Thr-6 is part of the active site. The Na(+) site is built by Ala-164, Cys-167, and Thr-170.

Belongs to the peptidase T1B family. HslV subfamily. As to quaternary structure, a double ring-shaped homohexamer of HslV is capped on each side by a ring-shaped HslU homohexamer. The assembly of the HslU/HslV complex is dependent on binding of ATP.

The protein localises to the cytoplasm. It carries out the reaction ATP-dependent cleavage of peptide bonds with broad specificity.. Allosterically activated by HslU binding. Its function is as follows. Protease subunit of a proteasome-like degradation complex believed to be a general protein degrading machinery. The polypeptide is ATP-dependent protease subunit HslV (Borreliella afzelii (strain PKo) (Borrelia afzelii)).